The sequence spans 244 residues: 1-(5-phosphoribosyl)-5-[(5-phosphoribosylamino)methylideneamino] imidazole-4-carboxamide isomerase (244 aa).

Aspartate 12 (proton acceptor) is an active-site residue. Aspartate 131 functions as the Proton donor in the catalytic mechanism.

The protein belongs to the HisA/HisF family.

Its subcellular location is the cytoplasm. It catalyses the reaction 1-(5-phospho-beta-D-ribosyl)-5-[(5-phospho-beta-D-ribosylamino)methylideneamino]imidazole-4-carboxamide = 5-[(5-phospho-1-deoxy-D-ribulos-1-ylimino)methylamino]-1-(5-phospho-beta-D-ribosyl)imidazole-4-carboxamide. It functions in the pathway amino-acid biosynthesis; L-histidine biosynthesis; L-histidine from 5-phospho-alpha-D-ribose 1-diphosphate: step 4/9. This chain is 1-(5-phosphoribosyl)-5-[(5-phosphoribosylamino)methylideneamino] imidazole-4-carboxamide isomerase, found in Nocardioides sp. (strain ATCC BAA-499 / JS614).